The sequence spans 74 residues: MPMIDVPDNNAFDVAMRRFKRACEKAGILSKLRQIEYYEKPTSKRKRKRAAAVKRYAKKLQKEQEALERERTRY.

Belongs to the bacterial ribosomal protein bS21 family.

The chain is Small ribosomal subunit protein bS21 from Coxiella burnetii (strain Dugway 5J108-111).